A 1034-amino-acid polypeptide reads, in one-letter code: Ubiquitin-like-specific protease 2 (1034 aa).

Disordered stretches follow at residues Met-1–Asp-42, Ile-71–Leu-110, Ser-388–Thr-419, Ile-731–His-800, Gly-841–Gly-960, and Ser-983–Pro-1034. The segment covering Ser-19–Pro-33 has biased composition (low complexity). Over residues Ser-74–Glu-85 the composition is skewed to acidic residues. Over residues Thr-743 to Thr-756 the composition is skewed to low complexity. The residue at position 788 (Ser-788) is a Phosphoserine. Polar residues-rich tracts occupy residues Pro-845–His-856, Gln-876–Asp-904, and Gly-912–Ile-923. Ser-903 is modified (phosphoserine). Ser-983 and Ser-984 each carry phosphoserine. Polar residues predominate over residues Thr-992–Ser-1017.

The protein belongs to the peptidase C48 family.

In terms of biological role, insertion mutation in SMT4 confers temperature and benomyl sensitivity; high copy suppressor of a temperature sensitive mutation in MIF2. This Saccharomyces cerevisiae (strain ATCC 204508 / S288c) (Baker's yeast) protein is Ubiquitin-like-specific protease 2 (ULP2).